We begin with the raw amino-acid sequence, 394 residues long: Elongation factor Tu 1 (394 aa).

In terms of domain architecture, tr-type G spans 10 to 204 (KPHVNVGTIG…ALDSYIPEPQ (195 aa)). Residues 19-26 (GHVDHGKT) form a G1 region. Position 19 to 26 (19 to 26 (GHVDHGKT)) interacts with GTP. Mg(2+) is bound at residue Thr-26. The G2 stretch occupies residues 60-64 (GITIS). Residues 81–84 (DCPG) form a G3 region. GTP-binding positions include 81 to 85 (DCPGH) and 136 to 139 (NKCD). A G4 region spans residues 136 to 139 (NKCD). A G5 region spans residues 174 to 176 (SAL).

This sequence belongs to the TRAFAC class translation factor GTPase superfamily. Classic translation factor GTPase family. EF-Tu/EF-1A subfamily. Monomer.

The protein resides in the cytoplasm. It carries out the reaction GTP + H2O = GDP + phosphate + H(+). Its function is as follows. GTP hydrolase that promotes the GTP-dependent binding of aminoacyl-tRNA to the A-site of ribosomes during protein biosynthesis. This Pseudoalteromonas translucida (strain TAC 125) protein is Elongation factor Tu 1.